The following is a 465-amino-acid chain: tRNA modification GTPase MnmE (465 aa).

3 residues coordinate (6S)-5-formyl-5,6,7,8-tetrahydrofolate: R24, E84, and K127. A TrmE-type G domain is found at G223–G383. A K(+)-binding site is contributed by N233. Residues N233–S238, T252–T258, and D277–G280 contribute to the GTP site. Residue S237 coordinates Mg(2+). Residues T252, I254, and T257 each coordinate K(+). Position 258 (T258) interacts with Mg(2+). K465 is a binding site for (6S)-5-formyl-5,6,7,8-tetrahydrofolate.

This sequence belongs to the TRAFAC class TrmE-Era-EngA-EngB-Septin-like GTPase superfamily. TrmE GTPase family. Homodimer. Heterotetramer of two MnmE and two MnmG subunits. It depends on K(+) as a cofactor.

The protein localises to the cytoplasm. Its function is as follows. Exhibits a very high intrinsic GTPase hydrolysis rate. Involved in the addition of a carboxymethylaminomethyl (cmnm) group at the wobble position (U34) of certain tRNAs, forming tRNA-cmnm(5)s(2)U34. This chain is tRNA modification GTPase MnmE, found in Janthinobacterium sp. (strain Marseille) (Minibacterium massiliensis).